A 241-amino-acid chain; its full sequence is Demethylmenaquinone methyltransferase (241 aa).

Residues Thr60, Asp81, and 106–107 each bind S-adenosyl-L-methionine; that span reads DA.

This sequence belongs to the class I-like SAM-binding methyltransferase superfamily. MenG/UbiE family.

It carries out the reaction a 2-demethylmenaquinol + S-adenosyl-L-methionine = a menaquinol + S-adenosyl-L-homocysteine + H(+). Its pathway is quinol/quinone metabolism; menaquinone biosynthesis; menaquinol from 1,4-dihydroxy-2-naphthoate: step 2/2. Methyltransferase required for the conversion of demethylmenaquinol (DMKH2) to menaquinol (MKH2). This is Demethylmenaquinone methyltransferase from Staphylococcus aureus (strain Mu3 / ATCC 700698).